The following is a 393-amino-acid chain: uncharacterized protein (393 aa).

8 helical membrane passes run 15 to 35 (IVAF…VTIF), 56 to 76 (WGWI…NVII), 86 to 106 (FYAS…FQIV), 131 to 151 (AVLI…LITW), 176 to 196 (LSLT…VIAF), 253 to 273 (LLAN…VFMI), 289 to 309 (LIDL…IPVA), and 349 to 369 (VYLP…QVIW).

It localises to the cell membrane. This is an uncharacterized protein from Mycoplasma genitalium (strain ATCC 33530 / DSM 19775 / NCTC 10195 / G37) (Mycoplasmoides genitalium).